We begin with the raw amino-acid sequence, 78 residues long: uncharacterized protein (78 aa).

This is an uncharacterized protein from Archaeoglobus fulgidus (strain ATCC 49558 / DSM 4304 / JCM 9628 / NBRC 100126 / VC-16).